The chain runs to 366 residues: Ribosomal RNA large subunit methyltransferase M (366 aa).

S-adenosyl-L-methionine contacts are provided by residues Ser-188, Cys-221 to Gly-224, Asp-240, Asp-260, and Asp-277. Catalysis depends on Lys-306, which acts as the Proton acceptor.

The protein belongs to the class I-like SAM-binding methyltransferase superfamily. RNA methyltransferase RlmE family. RlmM subfamily. In terms of assembly, monomer.

It is found in the cytoplasm. It carries out the reaction cytidine(2498) in 23S rRNA + S-adenosyl-L-methionine = 2'-O-methylcytidine(2498) in 23S rRNA + S-adenosyl-L-homocysteine + H(+). Catalyzes the 2'-O-methylation at nucleotide C2498 in 23S rRNA. The protein is Ribosomal RNA large subunit methyltransferase M of Salmonella heidelberg (strain SL476).